Here is a 328-residue protein sequence, read N- to C-terminus: Spermatogenesis- and oogenesis-specific basic helix-loop-helix-containing protein 1 (328 aa).

The bHLH domain occupies 53 to 104 (SCLRRNVISERERRKRMSLSCERLRALLPQFDGRREDMASVLEMSVQFLRLA). Residues 290-328 (EAGSALGSDVDDGTSFLLTAGPSSWPGEWGPGFRAGPPA) form a disordered region. Residues 310 to 321 (GPSSWPGEWGPG) show a composition bias toward low complexity.

Forms both hetero- and homodimers with SOHLH2.

Its subcellular location is the cytoplasm. It is found in the nucleus. In terms of biological role, transcription regulator of both male and female germline differentiation. Suppresses genes involved in spermatogonial stem cells maintenance, and induces genes important for spermatogonial differentiation. Coordinates oocyte differentiation without affecting meiosis I. The polypeptide is Spermatogenesis- and oogenesis-specific basic helix-loop-helix-containing protein 1 (SOHLH1) (Homo sapiens (Human)).